A 54-amino-acid polypeptide reads, in one-letter code: Lectin alpha chain (54 aa).

The protein belongs to the leguminous lectin family. Tetramer of two alpha and two beta chains.

This is Lectin alpha chain from Lathyrus odoratus (Sweet pea).